Here is a 419-residue protein sequence, read N- to C-terminus: UDP-N-acetylglucosamine 1-carboxyvinyltransferase (419 aa).

22 to 23 (KN) contributes to the phosphoenolpyruvate binding site. Residue Arg-91 participates in UDP-N-acetyl-alpha-D-glucosamine binding. Catalysis depends on Cys-115, which acts as the Proton donor. Cys-115 carries the 2-(S-cysteinyl)pyruvic acid O-phosphothioketal modification. UDP-N-acetyl-alpha-D-glucosamine contacts are provided by residues 120 to 124 (RPVDL), 160 to 163 (KVSV), Asp-305, and Val-327.

The protein belongs to the EPSP synthase family. MurA subfamily.

It is found in the cytoplasm. The enzyme catalyses phosphoenolpyruvate + UDP-N-acetyl-alpha-D-glucosamine = UDP-N-acetyl-3-O-(1-carboxyvinyl)-alpha-D-glucosamine + phosphate. It participates in cell wall biogenesis; peptidoglycan biosynthesis. Its function is as follows. Cell wall formation. Adds enolpyruvyl to UDP-N-acetylglucosamine. The sequence is that of UDP-N-acetylglucosamine 1-carboxyvinyltransferase from Shigella sonnei (strain Ss046).